The following is a 244-amino-acid chain: Cell division protein ZapD (244 aa).

Belongs to the ZapD family. As to quaternary structure, interacts with FtsZ.

Its subcellular location is the cytoplasm. In terms of biological role, cell division factor that enhances FtsZ-ring assembly. Directly interacts with FtsZ and promotes bundling of FtsZ protofilaments, with a reduction in FtsZ GTPase activity. The polypeptide is Cell division protein ZapD (Shewanella sp. (strain MR-7)).